Consider the following 105-residue polypeptide: DNA-directed RNA polymerase subunit omega (105 aa).

Belongs to the RNA polymerase subunit omega family. As to quaternary structure, the RNAP catalytic core consists of 2 alpha, 1 beta, 1 beta' and 1 omega subunit. When a sigma factor is associated with the core the holoenzyme is formed, which can initiate transcription.

The catalysed reaction is RNA(n) + a ribonucleoside 5'-triphosphate = RNA(n+1) + diphosphate. In terms of biological role, promotes RNA polymerase assembly. Latches the N- and C-terminal regions of the beta' subunit thereby facilitating its interaction with the beta and alpha subunits. The sequence is that of DNA-directed RNA polymerase subunit omega from Streptococcus equi subsp. zooepidemicus (strain MGCS10565).